We begin with the raw amino-acid sequence, 336 residues long: tRNA N6-adenosine threonylcarbamoyltransferase (336 aa).

Fe cation is bound by residues H111 and H115. Substrate-binding positions include 134 to 138, D167, G180, and N271; that span reads LVSGG. D299 serves as a coordination point for Fe cation.

This sequence belongs to the KAE1 / TsaD family. Fe(2+) is required as a cofactor.

It localises to the cytoplasm. The catalysed reaction is L-threonylcarbamoyladenylate + adenosine(37) in tRNA = N(6)-L-threonylcarbamoyladenosine(37) in tRNA + AMP + H(+). Its function is as follows. Required for the formation of a threonylcarbamoyl group on adenosine at position 37 (t(6)A37) in tRNAs that read codons beginning with adenine. Is involved in the transfer of the threonylcarbamoyl moiety of threonylcarbamoyl-AMP (TC-AMP) to the N6 group of A37, together with TsaE and TsaB. TsaD likely plays a direct catalytic role in this reaction. This Thioalkalivibrio sulfidiphilus (strain HL-EbGR7) protein is tRNA N6-adenosine threonylcarbamoyltransferase.